The sequence spans 435 residues: MGYAMRLALIDGEHYPDVNRWALEKLKVDCAVFVGGMEKIGSIRDVERTLSIKLYYDEDIFKALERAIEENEIREVIDLSDEPVLTPEIRFRIASFLLKRGITYIGADFEFKPKEWIKIDVPSINIIGTGKRIGKTAIGGFVGRTLKEEYKVVIVTMGRGGPESPEVIRGDLMEITPEFLVEVSEKGRHAASDHFEDALTAGVATVGCRRCGGGLAGFTFLDVLQKGIEVAKSLNPEIIVFEGSGASFANVLSEGFITVVSALQGKEIKMYLYPLRISLGDLIVVTMADEVKDPGKISSLIKEINPDADIHLTRFSPRLIGNVEGKAVVVTTSTNSAKRVTKELEDRGIDVVGFSGNLANRVKLREELKKVSYDTLIVELKAGAVDVAIKSALRSGKRIVFLDYEPKNIDDKDLRESVKELARRIVNDKGHRKGR.

This sequence belongs to the cyclic 2,3-diphosphoglycerate synthetase family.

The protein resides in the cytoplasm. It catalyses the reaction (2R)-2,3-bisphosphoglycerate + ATP + H(+) = cyclic (2R)-2,3-bisphosphoglycerate + ADP + phosphate. Its function is as follows. Catalyzes the formation of cyclic 2,3-diphosphoglycerate (cDPG) by formation of an intramolecular phosphoanhydride bond at the expense of ATP. The protein is Cyclic 2,3-diphosphoglycerate synthetase of Pyrococcus horikoshii (strain ATCC 700860 / DSM 12428 / JCM 9974 / NBRC 100139 / OT-3).